Consider the following 173-residue polypeptide: Peptide methionine sulfoxide reductase MsrA (173 aa).

Residue C10 is part of the active site.

Belongs to the MsrA Met sulfoxide reductase family.

It carries out the reaction L-methionyl-[protein] + [thioredoxin]-disulfide + H2O = L-methionyl-(S)-S-oxide-[protein] + [thioredoxin]-dithiol. The catalysed reaction is [thioredoxin]-disulfide + L-methionine + H2O = L-methionine (S)-S-oxide + [thioredoxin]-dithiol. Has an important function as a repair enzyme for proteins that have been inactivated by oxidation. Catalyzes the reversible oxidation-reduction of methionine sulfoxide in proteins to methionine. This is Peptide methionine sulfoxide reductase MsrA from Psychrobacter arcticus (strain DSM 17307 / VKM B-2377 / 273-4).